We begin with the raw amino-acid sequence, 101 residues long: ATP synthase subunit c (101 aa).

2 consecutive transmembrane segments (helical) span residues 31–51 and 81–101; these read AFAY…GAGQ and AISE…IFVG.

It belongs to the ATPase C chain family. As to quaternary structure, F-type ATPases have 2 components, F(1) - the catalytic core - and F(0) - the membrane proton channel. F(1) has five subunits: alpha(3), beta(3), gamma(1), delta(1), epsilon(1). F(0) has three main subunits: a(1), b(2) and c(10-14). The alpha and beta chains form an alternating ring which encloses part of the gamma chain. F(1) is attached to F(0) by a central stalk formed by the gamma and epsilon chains, while a peripheral stalk is formed by the delta and b chains.

Its subcellular location is the cell membrane. Its function is as follows. F(1)F(0) ATP synthase produces ATP from ADP in the presence of a proton or sodium gradient. F-type ATPases consist of two structural domains, F(1) containing the extramembraneous catalytic core and F(0) containing the membrane proton channel, linked together by a central stalk and a peripheral stalk. During catalysis, ATP synthesis in the catalytic domain of F(1) is coupled via a rotary mechanism of the central stalk subunits to proton translocation. Functionally, key component of the F(0) channel; it plays a direct role in translocation across the membrane. A homomeric c-ring of between 10-14 subunits forms the central stalk rotor element with the F(1) delta and epsilon subunits. The polypeptide is ATP synthase subunit c (Mesomycoplasma hyopneumoniae (strain 232) (Mycoplasma hyopneumoniae)).